Reading from the N-terminus, the 292-residue chain is Glycine--tRNA ligase alpha subunit (292 aa).

The protein belongs to the class-II aminoacyl-tRNA synthetase family. Tetramer of two alpha and two beta subunits.

Its subcellular location is the cytoplasm. The catalysed reaction is tRNA(Gly) + glycine + ATP = glycyl-tRNA(Gly) + AMP + diphosphate. The polypeptide is Glycine--tRNA ligase alpha subunit (Synechococcus sp. (strain ATCC 27144 / PCC 6301 / SAUG 1402/1) (Anacystis nidulans)).